The chain runs to 414 residues: Multifunctional CCA protein (414 aa).

The ATP site is built by glycine 8 and arginine 11. The CTP site is built by glycine 8 and arginine 11. Residues glutamate 21 and aspartate 23 each coordinate Mg(2+). Arginine 91, arginine 137, and arginine 140 together coordinate ATP. CTP contacts are provided by arginine 91, arginine 137, and arginine 140. Positions 228-329 (TGIHTMMTVA…LKLFDAIDVW (102 aa)) constitute an HD domain.

This sequence belongs to the tRNA nucleotidyltransferase/poly(A) polymerase family. Bacterial CCA-adding enzyme type 1 subfamily. In terms of assembly, monomer. Can also form homodimers and oligomers. Mg(2+) serves as cofactor. It depends on Ni(2+) as a cofactor.

The catalysed reaction is a tRNA precursor + 2 CTP + ATP = a tRNA with a 3' CCA end + 3 diphosphate. It carries out the reaction a tRNA with a 3' CCA end + 2 CTP + ATP = a tRNA with a 3' CCACCA end + 3 diphosphate. Its function is as follows. Catalyzes the addition and repair of the essential 3'-terminal CCA sequence in tRNAs without using a nucleic acid template. Adds these three nucleotides in the order of C, C, and A to the tRNA nucleotide-73, using CTP and ATP as substrates and producing inorganic pyrophosphate. tRNA 3'-terminal CCA addition is required both for tRNA processing and repair. Also involved in tRNA surveillance by mediating tandem CCA addition to generate a CCACCA at the 3' terminus of unstable tRNAs. While stable tRNAs receive only 3'-terminal CCA, unstable tRNAs are marked with CCACCA and rapidly degraded. This chain is Multifunctional CCA protein, found in Pectobacterium carotovorum subsp. carotovorum (strain PC1).